The chain runs to 216 residues: MTRLVLGSASSGRLKVLQQAGVDPLVVVSGVDEDAIMAGLGPAATPADVVRVLARAKAEQVATTLTGQQASVAADCLVIGCDSMLYIDGRLCGKPETVDDARQLWRSMAGRCGHLYTGHSVVRLTEQRVTHRDDETSTTTVHFAAPSDDDLEAYLATGESLKVAGGFTLDGLGGWFITGVEGDPSAVVGIGLPLTRDLISRAGISIAALWASNPLP.

Asp-82 (proton acceptor) is an active-site residue.

It belongs to the Maf family. Requires a divalent metal cation as cofactor.

The protein resides in the cytoplasm. The enzyme catalyses a ribonucleoside 5'-triphosphate + H2O = a ribonucleoside 5'-phosphate + diphosphate + H(+). It catalyses the reaction a 2'-deoxyribonucleoside 5'-triphosphate + H2O = a 2'-deoxyribonucleoside 5'-phosphate + diphosphate + H(+). Functionally, nucleoside triphosphate pyrophosphatase. May have a dual role in cell division arrest and in preventing the incorporation of modified nucleotides into cellular nucleic acids. The protein is Nucleoside triphosphate pyrophosphatase of Mycobacterium ulcerans (strain Agy99).